The following is a 537-amino-acid chain: Cytochrome bd ubiquinol oxidase subunit 1 (537 aa).

Residues 1–24 lie on the Cytoplasmic side of the membrane; that stretch reads MISESVVDLSRLQFAMTALYHFLF. Position 21 (H21) interacts with heme b. Residues 25-44 traverse the membrane as a helical segment; it reads VPLTLGMTFLLAIMESVYVM. Over 45–96 the chain is Periplasmic; the sequence is TGKQVYKDMVKFWGKLFGINFALGVTTGITMEFQFGTNWAYYSHYVGDIFGA. Residues 97–116 form a helical membrane-spanning segment; the sequence is PLAIEGLTAFFLESTFIGMF. The Cytoplasmic portion of the chain corresponds to 117–131; that stretch reads FFGWDRLSKIQHLAV. The helical transmembrane segment at 132–151 threads the bilayer; the sequence is TWLVALGSNLSALWILVANG. Topologically, residues 152-189 are periplasmic; it reads WMQHPVGAEFNFETMRMELVDFGALLLNPVAQVKFVHT. Residue H188 coordinates heme b. A helical transmembrane segment spans residues 190 to 209; sequence VASGYVTGAVFVLAISSYYL. At 210-221 the chain is on the cytoplasmic side; it reads LKKRDLGFARRS. A helical transmembrane segment spans residues 222–241; the sequence is FAIASAFGMASILSVIVLGD. Topologically, residues 242 to 394 are periplasmic; that stretch reads ESGYEVGEVQ…VASMFWSFRA (153 aa). M395 is a heme b binding site. Residues 395-414 traverse the membrane as a helical segment; that stretch reads MVGAGFAMLILFVCAFWASA. The Cytoplasmic segment spans residues 415 to 472; it reads RKNEESKPWLLKFALYSLPLPWIATQTGWFVAEHGRQPWTIGGVLPTHLSASSLSTGD. Residues 473–492 form a helical membrane-spanning segment; it reads LWGSLIALIAFYTLLLVVEM. Residues 493–537 lie on the Periplasmic side of the membrane; it reads YLMIRFARLGPSSLHTGRYHFEQLEQHAVKHASPSQADPQQPVNA.

It belongs to the cytochrome ubiquinol oxidase subunit 1 family. As to quaternary structure, heterodimer of subunits I and II. Heme b serves as cofactor. It depends on heme d cis-diol as a cofactor.

The protein localises to the cell inner membrane. The catalysed reaction is 2 a ubiquinol + O2(in) + 4 H(+)(in) = 2 a ubiquinone + 2 H2O(in) + 4 H(+)(out). Functionally, may be involved in maintaining the low intracellular oxygen concentration required for nitrogen fixation. The protein is Cytochrome bd ubiquinol oxidase subunit 1 (cydA) of Azotobacter vinelandii.